A 234-amino-acid chain; its full sequence is uncharacterized protein (234 aa).

An ABC transporter domain is found at Met-5–Thr-234. Gly-41–Ser-48 is an ATP binding site.

It belongs to the ABC transporter superfamily.

This is an uncharacterized protein from Thermotoga maritima (strain ATCC 43589 / DSM 3109 / JCM 10099 / NBRC 100826 / MSB8).